Reading from the N-terminus, the 753-residue chain is Catalase-peroxidase (753 aa).

The first 39 residues, 1-39 (MLPRVNKRSNCIAKKTSNRLISAVSLAIASLCISQSALA), serve as a signal peptide directing secretion. A cross-link (tryptophyl-tyrosyl-methioninium (Trp-Tyr) (with M-267)) is located at residues 118 to 241 (WHSTGTYRMS…LAAVQMGLIY (124 aa)). Catalysis depends on H119, which acts as the Proton acceptor. A cross-link (tryptophyl-tyrosyl-methioninium (Tyr-Met) (with W-118)) is located at residues 241-267 (YVNPEGPNGNHDPISAAADIRDVFARM). H282 lines the heme b pocket.

The protein belongs to the peroxidase family. Peroxidase/catalase subfamily. Homodimer or homotetramer. Heme b is required as a cofactor. Post-translationally, formation of the three residue Trp-Tyr-Met cross-link is important for the catalase, but not the peroxidase activity of the enzyme.

The enzyme catalyses H2O2 + AH2 = A + 2 H2O. It catalyses the reaction 2 H2O2 = O2 + 2 H2O. Bifunctional enzyme with both catalase and broad-spectrum peroxidase activity. This chain is Catalase-peroxidase, found in Pseudoalteromonas atlantica (strain T6c / ATCC BAA-1087).